The sequence spans 203 residues: Thymidylate kinase (203 aa).

14 to 21 provides a ligand contact to ATP; it reads GGEGSGKS.

Belongs to the thymidylate kinase family.

It carries out the reaction dTMP + ATP = dTDP + ADP. Its function is as follows. Phosphorylation of dTMP to form dTDP in both de novo and salvage pathways of dTTP synthesis. The protein is Thymidylate kinase of Rickettsia canadensis (strain McKiel).